Consider the following 148-residue polypeptide: Large ribosomal subunit protein uL15 (148 aa).

The disordered stretch occupies residues 1 to 46 (MITIEDLKPTPGSNKKYKRLGRGQGSGKGKTAGKGHKGQKSRGTGK). The span at 31 to 45 (TAGKGHKGQKSRGTG) shows a compositional bias: basic residues.

Belongs to the universal ribosomal protein uL15 family. As to quaternary structure, part of the 50S ribosomal subunit.

Functionally, binds to the 23S rRNA. The protein is Large ribosomal subunit protein uL15 of Fervidobacterium nodosum (strain ATCC 35602 / DSM 5306 / Rt17-B1).